Consider the following 1364-residue polypeptide: Formin-like protein 6 (1364 aa).

Residues 9-193 (YRKPPDGLLE…HYISRRNVSA (185 aa)) form the Phosphatase tensin-type domain. The active-site Phosphocysteine intermediate is C126. Positions 199–338 (DRALTLDCVI…FRAEVLFSEM (140 aa)) constitute a C2 tensin-type domain. Disordered regions lie at residues 614–934 (KCTP…NLKP), 976–999 (VLPS…KPEK), and 1317–1364 (EAEA…ASAK). Residues 617 to 631 (PSPPPLLPPLAPVVP) are compositionally biased toward pro residues. The span at 657–690 (SFPSLSPTQQKQSTSKLCQTILPTNHQLSSSNIT) shows a compositional bias: polar residues. The span at 734 to 743 (PPAPPPPPLQ) shows a compositional bias: pro residues. Over residues 744 to 757 (SPSTPRCSPVRTLA) the composition is skewed to low complexity. Pro residues-rich tracts occupy residues 774-813 (GPPP…PAAP) and 856-865 (PSPPPPPPPC). A compositionally biased stretch (polar residues) spans 916 to 929 (MSRSLQSGQAASRR). An FH2 domain is found at 922–1322 (SGQAASRRSN…KALKEAEAEK (401 aa)). The segment covering 1317–1351 (EAEAEKTKKEPENAQKTKEPGNDKAKHNNSIKELD) has biased composition (basic and acidic residues). Polar residues predominate over residues 1353–1364 (SLQSPAQTASAK).

The protein belongs to the formin-like family. Class-II subfamily.

This Oryza sativa subsp. japonica (Rice) protein is Formin-like protein 6 (FH6).